Consider the following 72-residue polypeptide: Translation initiation factor IF-1 (72 aa).

Residues 1–72 (MAKEESIEIE…SKGRITYRYK (72 aa)) form the S1-like domain.

The protein belongs to the IF-1 family. In terms of assembly, component of the 30S ribosomal translation pre-initiation complex which assembles on the 30S ribosome in the order IF-2 and IF-3, IF-1 and N-formylmethionyl-tRNA(fMet); mRNA recruitment can occur at any time during PIC assembly.

The protein resides in the cytoplasm. One of the essential components for the initiation of protein synthesis. Stabilizes the binding of IF-2 and IF-3 on the 30S subunit to which N-formylmethionyl-tRNA(fMet) subsequently binds. Helps modulate mRNA selection, yielding the 30S pre-initiation complex (PIC). Upon addition of the 50S ribosomal subunit IF-1, IF-2 and IF-3 are released leaving the mature 70S translation initiation complex. The protein is Translation initiation factor IF-1 of Chlorobium phaeovibrioides (strain DSM 265 / 1930) (Prosthecochloris vibrioformis (strain DSM 265)).